The sequence spans 154 residues: Myoglobin (154 aa).

In terms of domain architecture, Globin spans 2–148; the sequence is GLSDQEWQQV…FRNDMASKYK (147 aa). H65 serves as a coordination point for nitrite. Position 65 (H65) interacts with O2. Position 94 (H94) interacts with heme b.

This sequence belongs to the globin family. Monomeric.

It localises to the cytoplasm. The protein localises to the sarcoplasm. It catalyses the reaction Fe(III)-heme b-[protein] + nitric oxide + H2O = Fe(II)-heme b-[protein] + nitrite + 2 H(+). The enzyme catalyses H2O2 + AH2 = A + 2 H2O. Monomeric heme protein which primary function is to store oxygen and facilitate its diffusion within muscle tissues. Reversibly binds oxygen through a pentacoordinated heme iron and enables its timely and efficient release as needed during periods of heightened demand. Depending on the oxidative conditions of tissues and cells, and in addition to its ability to bind oxygen, it also has a nitrite reductase activity whereby it regulates the production of bioactive nitric oxide. Under stress conditions, like hypoxia and anoxia, it also protects cells against reactive oxygen species thanks to its pseudoperoxidase activity. The polypeptide is Myoglobin (MB) (Anas poecilorhyncha (Indian spot-billed duck)).